The chain runs to 367 residues: Glutamate 5-kinase (367 aa).

Lysine 9 lines the ATP pocket. Substrate-binding residues include serine 49, aspartate 136, and asparagine 148. Residues 168 to 169 (TD) and 210 to 216 (TGGMKSK) each bind ATP. One can recognise a PUA domain in the interval 276-350 (SGQIEVDAGA…GMQSQDIQAR (75 aa)).

It belongs to the glutamate 5-kinase family.

The protein localises to the cytoplasm. The catalysed reaction is L-glutamate + ATP = L-glutamyl 5-phosphate + ADP. The protein operates within amino-acid biosynthesis; L-proline biosynthesis; L-glutamate 5-semialdehyde from L-glutamate: step 1/2. In terms of biological role, catalyzes the transfer of a phosphate group to glutamate to form L-glutamate 5-phosphate. The sequence is that of Glutamate 5-kinase from Bacillus mycoides (strain KBAB4) (Bacillus weihenstephanensis).